We begin with the raw amino-acid sequence, 146 residues long: Hemoglobin subunit beta (146 aa).

The 145-residue stretch at 2 to 146 (HWSAEEKQLI…VAHALARKYH (145 aa)) folds into the Globin domain. Residues His63 and His92 each contribute to the heme b site.

It belongs to the globin family. As to quaternary structure, heterotetramer of two alpha chains and two beta chains. As to expression, red blood cells.

Involved in oxygen transport from the lung to the various peripheral tissues. The chain is Hemoglobin subunit beta (HBB) from Anseranas semipalmata (Magpie goose).